The following is a 320-amino-acid chain: Cytochrome f (320 aa).

Residues 1–35 (MQTRKTFSWIKEQINRSISVSLMIYIITRPSISIA) form the signal peptide. Heme contacts are provided by Y36, C56, C59, and H60. A helical transmembrane segment spans residues 286–306 (VQGLLFFLASVILAQIFLVLK).

Belongs to the cytochrome f family. As to quaternary structure, the 4 large subunits of the cytochrome b6-f complex are cytochrome b6, subunit IV (17 kDa polypeptide, petD), cytochrome f and the Rieske protein, while the 4 small subunits are PetG, PetL, PetM and PetN. The complex functions as a dimer. Requires heme as cofactor.

It localises to the plastid. The protein resides in the chloroplast thylakoid membrane. Its function is as follows. Component of the cytochrome b6-f complex, which mediates electron transfer between photosystem II (PSII) and photosystem I (PSI), cyclic electron flow around PSI, and state transitions. This is Cytochrome f from Daucus carota (Wild carrot).